The sequence spans 182 residues: Nucleoside triphosphate/diphosphate phosphatase (182 aa).

Arginine 27 acts as the Proton donor in catalysis. Mg(2+) is bound by residues asparagine 91, aspartate 107, aspartate 109, aspartate 111, aspartate 124, and glutamate 127.

Belongs to the Ntdp family. Requires Mg(2+) as cofactor.

The catalysed reaction is a ribonucleoside 5'-triphosphate + H2O = a ribonucleoside 5'-diphosphate + phosphate + H(+). It carries out the reaction a ribonucleoside 5'-diphosphate + H2O = a ribonucleoside 5'-phosphate + phosphate + H(+). Functionally, has nucleoside phosphatase activity towards nucleoside triphosphates and nucleoside diphosphates. In Lactiplantibacillus plantarum (strain ATCC BAA-793 / NCIMB 8826 / WCFS1) (Lactobacillus plantarum), this protein is Nucleoside triphosphate/diphosphate phosphatase.